The primary structure comprises 255 residues: Thrombin-like enzyme batroxobin (255 aa).

An N-terminal signal peptide occupies residues 1–18 (MVLIRVIANLLILQVSYA). A propeptide spanning residues 19–24 (QKSSEL) is cleaved from the precursor. Positions 25 to 247 (VIGGDECDIN…YLPWIQSIIA (223 aa)) constitute a Peptidase S1 domain. 6 cysteine pairs are disulfide-bonded: Cys-31–Cys-163, Cys-50–Cys-66, Cys-98–Cys-254, Cys-142–Cys-208, Cys-174–Cys-187, and Cys-198–Cys-223. Active-site charge relay system residues include His-65 and Asp-110. Asn-170 carries N-linked (GlcNAc...) asparagine glycosylation. Ser-202 (charge relay system) is an active-site residue. N-linked (GlcNAc...) asparagine glycosylation is present at Asn-249.

It belongs to the peptidase S1 family. Snake venom subfamily. As to quaternary structure, monomer. In terms of tissue distribution, expressed by the venom gland.

The protein resides in the secreted. The enzyme catalyses Selective cleavage of Arg-|-Xaa bond in fibrinogen, to form fibrin, and release fibrinopeptide A. The specificity of further degradation of fibrinogen varies with species origin of the enzyme.. Its function is as follows. Thrombin-like snake venom serine protease. Cleaves Arg-Gly bonds in fibrinogen alpha chains (FGA). This chain is Thrombin-like enzyme batroxobin, found in Bothrops atrox (Barba amarilla).